The following is a 372-amino-acid chain: Cytochrome b (372 aa).

4 consecutive transmembrane segments (helical) span residues 32-52 (LGFN…CLSW), 77-99 (FIIR…IHII), 114-134 (VWFF…IGYT), and 180-200 (LHSI…AHFF). Heme b is bound by residues histidine 83 and histidine 97. 2 residues coordinate heme b: histidine 184 and histidine 198. An a ubiquinone-binding site is contributed by histidine 203. 4 consecutive transmembrane segments (helical) span residues 228–248 (YYLR…YYIC), 297–317 (LLFV…LIFI), 330–350 (LVLF…VLCF), and 351–371 (PLWM…VCRL).

It belongs to the cytochrome b family. The main subunits of complex b-c1 are: cytochrome b, cytochrome c1 and the Rieske protein. Heme b is required as a cofactor.

The protein resides in the mitochondrion inner membrane. In terms of biological role, component of the ubiquinol-cytochrome c reductase complex (complex III or cytochrome b-c1 complex) that is part of the mitochondrial respiratory chain. The b-c1 complex mediates electron transfer from ubiquinol to cytochrome c. Contributes to the generation of a proton gradient across the mitochondrial membrane that is then used for ATP synthesis. The sequence is that of Cytochrome b (MT-CYB) from Trypanoplasma borreli.